Consider the following 357-residue polypeptide: tRNA-specific 2-thiouridylase MnmA (357 aa).

Residues 11-18 (AMSGGVDS) and L37 each bind ATP. C102 (nucleophile) is an active-site residue. Cysteines 102 and 197 form a disulfide. Residue G126 participates in ATP binding. The interaction with tRNA stretch occupies residues 148–150 (KDQ). The active-site Cysteine persulfide intermediate is C197. Residues 301-302 (RY) form an interaction with tRNA region.

It belongs to the MnmA/TRMU family.

The protein resides in the cytoplasm. The catalysed reaction is S-sulfanyl-L-cysteinyl-[protein] + uridine(34) in tRNA + AH2 + ATP = 2-thiouridine(34) in tRNA + L-cysteinyl-[protein] + A + AMP + diphosphate + H(+). In terms of biological role, catalyzes the 2-thiolation of uridine at the wobble position (U34) of tRNA, leading to the formation of s(2)U34. The chain is tRNA-specific 2-thiouridylase MnmA from Dehalococcoides mccartyi (strain ATCC BAA-2266 / KCTC 15142 / 195) (Dehalococcoides ethenogenes (strain 195)).